We begin with the raw amino-acid sequence, 248 residues long: Probable transcriptional regulatory protein Ccel_0181 (248 aa).

This sequence belongs to the TACO1 family.

It localises to the cytoplasm. The chain is Probable transcriptional regulatory protein Ccel_0181 from Ruminiclostridium cellulolyticum (strain ATCC 35319 / DSM 5812 / JCM 6584 / H10) (Clostridium cellulolyticum).